We begin with the raw amino-acid sequence, 290 residues long: Undecaprenyl-diphosphatase (290 aa).

The next 8 helical transmembrane spans lie at 1–21 (MFLLELIKGIILGIVEGLTEF), 48–68 (SAFTFKVVIQLGSVFAAAWVF), 101–121 (IHVLVGMVPAGILGFLFDDLI), 125–145 (LFSVPTVLIGLFIGAIYMIIA), 161–181 (INYFQAFVIGISQAIAMWPGF), 202–222 (SDFTFIMSVPIMLAASGLSLL), 231–251 (AHIPFYILGFLAAFIVGLIAI), and 266–286 (FAIYRIVLVIFIAILYFGFGI).

It belongs to the UppP family.

It localises to the cell membrane. The catalysed reaction is di-trans,octa-cis-undecaprenyl diphosphate + H2O = di-trans,octa-cis-undecaprenyl phosphate + phosphate + H(+). Functionally, catalyzes the dephosphorylation of undecaprenyl diphosphate (UPP). Confers resistance to bacitracin. The polypeptide is Undecaprenyl-diphosphatase (Staphylococcus epidermidis (strain ATCC 35984 / DSM 28319 / BCRC 17069 / CCUG 31568 / BM 3577 / RP62A)).